A 569-amino-acid chain; its full sequence is Protein angel homolog 2 (569 aa).

Disordered regions lie at residues 1–22 (MRKG…GVSP), 63–92 (LQHP…WSSW), and 109–155 (GLME…WLRN). The segment covering 63 to 72 (LQHPSSSFST) has biased composition (polar residues). Positions 139–150 (PPKGSRSPKGSP) are enriched in low complexity.

Belongs to the CCR4/nocturin family.

The sequence is that of Protein angel homolog 2 (angel2) from Danio rerio (Zebrafish).